The following is a 464-amino-acid chain: Multifunctional dye peroxidase DyP2 (464 aa).

The active-site Proton acceptor is aspartate 203. Mn(2+)-binding residues include glutamate 258, glutamate 273, and glutamate 284. Histidine 321 lines the heme pocket.

The protein belongs to the DyP-type peroxidase family. In terms of assembly, exists both as a monomeric and oligomeric species in solution; the monomeric form contains no bound heme cofactor and is inactive. Heme b serves as cofactor. The cofactor is Mn(2+).

It localises to the secreted. The catalysed reaction is 1-(4-hydroxy-3-methoxyphenyl)-2-(2-methoxyphenoxy)propane-1,3-diol + H2O2 = guaiacol + vanillin + glycolaldehyde + H2O. It catalyses the reaction 2 Mn(2+) + H2O2 + 2 H(+) = 2 Mn(3+) + 2 H2O. It carries out the reaction 2 a phenolic donor + H2O2 = 2 a phenolic radical donor + 2 H2O. The enzyme catalyses Reactive Blue 5 + 2 H2O2 = 2,2'-disulfonyl azobenzene + 3-[(4-amino-6-chloro-1,3,5-triazin-2-yl)amino]benzenesulfonate + phthalate + 2 H2O + 2 H(+). In terms of biological role, displays both high peroxidase and manganese peroxidase activity. Is likely involved in lignin degradation. Also has a Mn-dependent oxidase mode of action that expands its substrate scope in vitro; is thus able to catalyze the O(2)- and Mn-dependent oxidative decarboxylation of 4-methoxymandelate to anisaldehyde. This is Multifunctional dye peroxidase DyP2 from Amycolatopsis sp. (strain ATCC 39116 / 75iv2).